A 401-amino-acid polypeptide reads, in one-letter code: Protein KlcB (401 aa).

A disordered region spans residues 253–311; that stretch reads AARSNAKGKAGGRERDPASAETAMRCSTAKADDCKAEAGPVSPEATMPGAGEASCSTAR.

The chain is Protein KlcB (klcB) from Escherichia coli.